The primary structure comprises 154 residues: Ribonuclease H (154 aa).

The region spanning 1–142 (MKQVDIFTDG…CDTIARGHAS (142 aa)) is the RNase H type-1 domain. Residues D9, E47, D69, and D134 each contribute to the Mg(2+) site.

Belongs to the RNase H family. As to quaternary structure, monomer. It depends on Mg(2+) as a cofactor.

It localises to the cytoplasm. The catalysed reaction is Endonucleolytic cleavage to 5'-phosphomonoester.. Endonuclease that specifically degrades the RNA of RNA-DNA hybrids. This is Ribonuclease H from Oleidesulfovibrio alaskensis (strain ATCC BAA-1058 / DSM 17464 / G20) (Desulfovibrio alaskensis).